Consider the following 747-residue polypeptide: Myotubularin-related protein 12 (747 aa).

The region spanning Phe205–Tyr643 is the Myotubularin phosphatase domain. The interaction with MTM1 stretch occupies residues Val449–Lys558. Phosphoserine is present on residues Ser564, Ser601, and Ser716.

The protein belongs to the protein-tyrosine phosphatase family. Non-receptor class myotubularin subfamily. In terms of assembly, heterodimer with lipid phosphatase MTM1. Heterodimer with lipid phosphatase MTMR2. Expressed in skeletal muscles (at protein level). Ubiquitous with prominent expression in brain, heart, kidney, placenta, and lung.

It localises to the cytoplasm. The protein resides in the sarcoplasmic reticulum. The protein localises to the myofibril. Its subcellular location is the sarcomere. In terms of biological role, acts as an adapter for the myotubularin-related phosphatases. Regulates phosphatase MTM1 protein stability and possibly its intracellular location. By stabilizing MTM1 protein levels, required for skeletal muscle maintenance but not for myogenesis. The chain is Myotubularin-related protein 12 (MTMR12) from Homo sapiens (Human).